Here is an 879-residue protein sequence, read N- to C-terminus: Alanine--tRNA ligase (879 aa).

Residues H567, H571, C669, and H673 each coordinate Zn(2+).

It belongs to the class-II aminoacyl-tRNA synthetase family. The cofactor is Zn(2+).

The protein resides in the cytoplasm. The catalysed reaction is tRNA(Ala) + L-alanine + ATP = L-alanyl-tRNA(Ala) + AMP + diphosphate. Catalyzes the attachment of alanine to tRNA(Ala) in a two-step reaction: alanine is first activated by ATP to form Ala-AMP and then transferred to the acceptor end of tRNA(Ala). Also edits incorrectly charged Ser-tRNA(Ala) and Gly-tRNA(Ala) via its editing domain. The protein is Alanine--tRNA ligase of Lactobacillus helveticus (strain DPC 4571).